Reading from the N-terminus, the 406-residue chain is Argininosuccinate synthase (406 aa).

ATP is bound by residues Ala10–Ser18 and Ala37. Residues Tyr88 and Ser93 each coordinate L-citrulline. Residue Gly118 coordinates ATP. L-aspartate is bound by residues Thr120, Asn124, and Asp125. Asn124 contributes to the L-citrulline binding site. L-citrulline contacts are provided by Arg128, Ser179, Ser188, Glu264, and Tyr276.

Belongs to the argininosuccinate synthase family. Type 1 subfamily. As to quaternary structure, homotetramer.

It is found in the cytoplasm. The enzyme catalyses L-citrulline + L-aspartate + ATP = 2-(N(omega)-L-arginino)succinate + AMP + diphosphate + H(+). It functions in the pathway amino-acid biosynthesis; L-arginine biosynthesis; L-arginine from L-ornithine and carbamoyl phosphate: step 2/3. In Dinoroseobacter shibae (strain DSM 16493 / NCIMB 14021 / DFL 12), this protein is Argininosuccinate synthase.